A 336-amino-acid chain; its full sequence is Aspartate--ammonia ligase (336 aa).

This sequence belongs to the class-II aminoacyl-tRNA synthetase family. AsnA subfamily.

The protein localises to the cytoplasm. The catalysed reaction is L-aspartate + NH4(+) + ATP = L-asparagine + AMP + diphosphate + H(+). The protein operates within amino-acid biosynthesis; L-asparagine biosynthesis; L-asparagine from L-aspartate (ammonia route): step 1/1. The polypeptide is Aspartate--ammonia ligase (Lactobacillus johnsonii (strain CNCM I-12250 / La1 / NCC 533)).